We begin with the raw amino-acid sequence, 200 residues long: Protein GrpE (200 aa).

Residues 1–27 (MTKQEKAENQEKPTEETVEETPKKETP) show a composition bias toward basic and acidic residues. Positions 1–50 (MTKQEKAENQEKPTEETVEETPKKETPFEPVMEADEVEETTEAQAPVEEA) are disordered. Positions 32–41 (MEADEVEETT) are enriched in acidic residues.

The protein belongs to the GrpE family. As to quaternary structure, homodimer.

The protein localises to the cytoplasm. Its function is as follows. Participates actively in the response to hyperosmotic and heat shock by preventing the aggregation of stress-denatured proteins, in association with DnaK and GrpE. It is the nucleotide exchange factor for DnaK and may function as a thermosensor. Unfolded proteins bind initially to DnaJ; upon interaction with the DnaJ-bound protein, DnaK hydrolyzes its bound ATP, resulting in the formation of a stable complex. GrpE releases ADP from DnaK; ATP binding to DnaK triggers the release of the substrate protein, thus completing the reaction cycle. Several rounds of ATP-dependent interactions between DnaJ, DnaK and GrpE are required for fully efficient folding. This chain is Protein GrpE, found in Latilactobacillus sakei subsp. sakei (strain 23K) (Lactobacillus sakei subsp. sakei).